Consider the following 1111-residue polypeptide: Serine/threonine-protein kinase Nek10 (1111 aa).

Over residues 1–16 (MPDQDTKAKSTEKTAD) the composition is skewed to basic and acidic residues. 2 disordered regions span residues 1-24 (MPDQDTKAKSTEKTADKQQGTTTR) and 47-72 (AINFDSAQNNMTKSEPTIRTGGHRAR). Polar residues predominate over residues 47–63 (AINFDSAQNNMTKSEPT). Residues 481-514 (YKDLVSQLNLLLEDELKQIAENIESINQKKAPLK) are a coiled coil. In terms of domain architecture, Protein kinase spans 519-791 (YAVLDHLGSG…MISDVMMKYL (273 aa)). ATP is bound by residues 525–533 (LGSGAFGCV) and lysine 548. Aspartate 655 (proton acceptor) is an active-site residue.

Belongs to the protein kinase superfamily. NEK Ser/Thr protein kinase family. NIMA subfamily. As to quaternary structure, interacts with RAF1 and MAP2K1; the interaction is direct with RAF1 and required for ERK1/2-signaling pathway activation in response to UV irradiation. The cofactor is Mg(2+). As to expression, expressed in the mammary gland, lung, spleen, and kidney.

The enzyme catalyses L-seryl-[protein] + ATP = O-phospho-L-seryl-[protein] + ADP + H(+). The catalysed reaction is L-threonyl-[protein] + ATP = O-phospho-L-threonyl-[protein] + ADP + H(+). In terms of biological role, plays a role in the cellular response to UV irradiation. Mediates G2/M cell cycle arrest, MEK autoactivation and ERK1/2-signaling pathway activation in response to UV irradiation. In ciliated cells, it is involved in the regulation of mucociliary transport. The polypeptide is Serine/threonine-protein kinase Nek10 (Mus musculus (Mouse)).